The sequence spans 314 residues: Probable cell division protein WhiA (314 aa).

Positions 274 to 308 form a DNA-binding region, H-T-H motif; sequence SLKELGEMVSTGTISKSGVNHRLRKLNELADKIRS.

The protein belongs to the WhiA family.

Involved in cell division and chromosome segregation. This Staphylococcus carnosus (strain TM300) protein is Probable cell division protein WhiA.